Consider the following 190-residue polypeptide: UPF0301 protein Rpic_0619 (190 aa).

Belongs to the UPF0301 (AlgH) family.

This is UPF0301 protein Rpic_0619 from Ralstonia pickettii (strain 12J).